The chain runs to 261 residues: Putative glyoxylase CFP32 (261 aa).

VOC domains are found at residues 11 to 129 and 143 to 257; these read TPNW…LWQA and TLIW…VLKP. Glyoxalase regions lie at residues 13-123 and 149-252; these read NWVD…TGAA and LLTD…GAIF.

The chain is Putative glyoxylase CFP32 from Mycobacterium bovis (strain ATCC BAA-935 / AF2122/97).